Consider the following 333-residue polypeptide: Ketoreductase sphI (333 aa).

Tyr167 provides a ligand contact to NADP(+).

It belongs to the NAD(P)-dependent epimerase/dehydratase family. Dihydroflavonol-4-reductase subfamily.

Ketoreductase; part of the gene cluster that mediates the biosynthesis of sphingofungins, bioactive molecules acting as sphingolipid inhibitors via inhibiting serine palmitoyl transferase (SPT). Does not seem to be involved in any biosynthetic process leading to the production of sphingofungins, but might be connected to a regulation or resistance mechanism. This Aspergillus fumigatus (strain CBS 144.89 / FGSC A1163 / CEA10) (Neosartorya fumigata) protein is Ketoreductase sphI.